An 873-amino-acid chain; its full sequence is Cilia- and flagella-associated protein 58 (873 aa).

Coiled coils occupy residues 106–609 and 642–832; these read VDSA…VISE and ETQY…QKRK. Positions 202–221 are disordered; that stretch reads QEIQHRQNEASRESRKKEKL. A compositionally biased stretch (basic and acidic residues) spans 204–221; sequence IQHRQNEASRESRKKEKL.

The protein belongs to the CFAP58 family. As to quaternary structure, interacts with ODFP2. As to expression, predominantly expressed in the testis. Also found at lower levels in ciliated cells and tissues such as neural progenitor cells and oviducts.

It localises to the cell projection. Its subcellular location is the cilium. It is found in the flagellum. The protein resides in the cytoplasm. The protein localises to the cytoskeleton. It localises to the microtubule organizing center. Its subcellular location is the centrosome. In terms of biological role, has an essential role in the assembly and organization of the sperm flagellar axoneme. Required for the elongation of the primary cilium and sperm flagellar midpiece via modulation of the Notch signaling pathway. In Mus musculus (Mouse), this protein is Cilia- and flagella-associated protein 58.